An 877-amino-acid chain; its full sequence is Alanine--tRNA ligase (877 aa).

The Zn(2+) site is built by histidine 567, histidine 571, cysteine 669, and histidine 673.

This sequence belongs to the class-II aminoacyl-tRNA synthetase family. The cofactor is Zn(2+).

The protein resides in the cytoplasm. It carries out the reaction tRNA(Ala) + L-alanine + ATP = L-alanyl-tRNA(Ala) + AMP + diphosphate. In terms of biological role, catalyzes the attachment of alanine to tRNA(Ala) in a two-step reaction: alanine is first activated by ATP to form Ala-AMP and then transferred to the acceptor end of tRNA(Ala). Also edits incorrectly charged Ser-tRNA(Ala) and Gly-tRNA(Ala) via its editing domain. The chain is Alanine--tRNA ligase from Rickettsia typhi (strain ATCC VR-144 / Wilmington).